Consider the following 98-residue polypeptide: Integration host factor subunit alpha (98 aa).

The tract at residues F49–I71 is disordered.

The protein belongs to the bacterial histone-like protein family. Heterodimer of an alpha and a beta chain.

Functionally, this protein is one of the two subunits of integration host factor, a specific DNA-binding protein that functions in genetic recombination as well as in transcriptional and translational control. This is Integration host factor subunit alpha from Shewanella sp. (strain ANA-3).